Reading from the N-terminus, the 174-residue chain is Large ribosomal subunit protein uL10 (174 aa).

It belongs to the universal ribosomal protein uL10 family. As to quaternary structure, part of the ribosomal stalk of the 50S ribosomal subunit. The N-terminus interacts with L11 and the large rRNA to form the base of the stalk. The C-terminus forms an elongated spine to which L12 dimers bind in a sequential fashion forming a multimeric L10(L12)X complex.

Forms part of the ribosomal stalk, playing a central role in the interaction of the ribosome with GTP-bound translation factors. The protein is Large ribosomal subunit protein uL10 of Synechococcus sp. (strain RCC307).